A 150-amino-acid polypeptide reads, in one-letter code: MIP18 family protein FAM96A (150 aa).

This sequence belongs to the MIP18 family.

In terms of biological role, may play a role in chromosome segregation through establishment of sister chromatid cohesion. The sequence is that of MIP18 family protein FAM96A (fam96A) from Dictyostelium discoideum (Social amoeba).